Reading from the N-terminus, the 336-residue chain is Dihydroorotate dehydrogenase (quinone) (336 aa).

Residues 62-66 (AGLDK) and threonine 86 each bind FMN. Lysine 66 is a binding site for substrate. 111–115 (NRMGF) is a substrate binding site. 2 residues coordinate FMN: asparagine 139 and asparagine 172. Asparagine 172 lines the substrate pocket. Serine 175 functions as the Nucleophile in the catalytic mechanism. Asparagine 177 serves as a coordination point for substrate. FMN-binding residues include lysine 217 and threonine 245. A substrate-binding site is contributed by 246–247 (NT). FMN-binding positions include glycine 268, glycine 297, and 318–319 (YS).

The protein belongs to the dihydroorotate dehydrogenase family. Type 2 subfamily. As to quaternary structure, monomer. The cofactor is FMN.

The protein resides in the cell membrane. The catalysed reaction is (S)-dihydroorotate + a quinone = orotate + a quinol. It participates in pyrimidine metabolism; UMP biosynthesis via de novo pathway; orotate from (S)-dihydroorotate (quinone route): step 1/1. Its function is as follows. Catalyzes the conversion of dihydroorotate to orotate with quinone as electron acceptor. This is Dihydroorotate dehydrogenase (quinone) from Yersinia pseudotuberculosis serotype O:1b (strain IP 31758).